A 140-amino-acid chain; its full sequence is Cysteine proteinase inhibitor 1 (140 aa).

The signal sequence occupies residues 1-26 (MRKYRVAGLVAALLVLHSLATPSAQA). The region spanning 48-135 (GGVEPVGNEN…KELQEFKPVD (88 aa)) is the Cystatin domain. The Secondary area of contact motif lies at 91 to 95 (QVVAG).

It belongs to the cystatin family. Phytocystatin subfamily.

It is found in the secreted. Functionally, there are two distinct cystatins in rice seeds (Oryzacystatin-1 and -2) with different specificities against cysteine proteinases. May be involved in the control of germination by inhibition of endogenous cysteine proteinases. May play a role in defense by inhibiting exogenous proteases such as those present in digestive tracks of insects and nematodes. This is Cysteine proteinase inhibitor 1 from Oryza sativa subsp. japonica (Rice).